The primary structure comprises 143 residues: Transcriptional regulator MraZ (143 aa).

2 SpoVT-AbrB domains span residues 5 to 47 (QYEH…SLDE) and 76 to 119 (AVEC…SKEV).

This sequence belongs to the MraZ family. In terms of assembly, forms oligomers.

It localises to the cytoplasm. The protein localises to the nucleoid. The protein is Transcriptional regulator MraZ of Caldanaerobacter subterraneus subsp. tengcongensis (strain DSM 15242 / JCM 11007 / NBRC 100824 / MB4) (Thermoanaerobacter tengcongensis).